The primary structure comprises 266 residues: Adaptin ear-binding coat-associated protein 2 (266 aa).

Disordered regions lie at residues 165-198 (MRKKEGAAGTPRARPTSAGGLSLLPPPPGGKSST) and 245-266 (DFTKSTGSPSSQSQPGTGWVQF). Ser-181 is modified (phosphoserine). 2 consecutive short sequence motifs (WXXF motif) follow at residues 243–246 (WGDF) and 263–266 (WVQF). Positions 249–266 (STGSPSSQSQPGTGWVQF) are enriched in low complexity.

It belongs to the NECAP family. In terms of assembly, interacts with AP1G1 and AP2A1 components of the adapter protein complexes AP-1 and AP-2. Interacts with the GAE domain proteins GGA1, GGA2 and GGA3. Expressed in brain, heart, kidney, liver, lung, skeletal muscles and testis (at protein level).

It is found in the cytoplasmic vesicle. The protein resides in the clathrin-coated vesicle membrane. The protein localises to the cell membrane. Functionally, involved in endocytosis. This is Adaptin ear-binding coat-associated protein 2 (Necap2) from Mus musculus (Mouse).